Consider the following 454-residue polypeptide: Trichosetin biosynthesis cluster transcription factor TF22 (454 aa).

The segment at residues 13 to 47 (CDRCRSHKLKCTVSPEDSRSGPHKCTRCIRAQVTC) is a DNA-binding region (zn(2)-C6 fungal-type). A disordered region spans residues 51–89 (PRSQSKRTPNGKNKPEKPKPELEPPQKTSPPVCSSSLAG). Positions 52 to 61 (RSQSKRTPNG) are enriched in polar residues. Basic and acidic residues predominate over residues 63–74 (NKPEKPKPELEP).

It is found in the nucleus. In terms of biological role, transcription factor that regulates the expression of the gene cluster that mediates the biosynthesis of trichosetin, a trans-fused decalin-containing tetramic acid with antimicrobial activity. Directly activates expression of only the three biosynthetic genes PKS-NRPS1, DA and ER, while TF23 and MFS-T are induced by the final product trichosetin and not by TF22. This chain is Trichosetin biosynthesis cluster transcription factor TF22, found in Gibberella fujikuroi (strain CBS 195.34 / IMI 58289 / NRRL A-6831) (Bakanae and foot rot disease fungus).